We begin with the raw amino-acid sequence, 306 residues long: TnpB-like protein aq_aa05 (306 aa).

Cys-213, Cys-216, Cys-234, and Cys-237 together coordinate Zn(2+).

The protein belongs to the transposase 35 family.

This chain is TnpB-like protein aq_aa05, found in Aquifex aeolicus (strain VF5).